The sequence spans 309 residues: tRNA pseudouridine synthase B (309 aa).

D45 serves as the catalytic Nucleophile.

Belongs to the pseudouridine synthase TruB family. Type 1 subfamily.

The catalysed reaction is uridine(55) in tRNA = pseudouridine(55) in tRNA. Its function is as follows. Responsible for synthesis of pseudouridine from uracil-55 in the psi GC loop of transfer RNAs. The sequence is that of tRNA pseudouridine synthase B from Oleidesulfovibrio alaskensis (strain ATCC BAA-1058 / DSM 17464 / G20) (Desulfovibrio alaskensis).